Consider the following 37-residue polypeptide: Cortex morphogenetic protein A (37 aa).

As to quaternary structure, can form a complex with SpoIVA and ClpX.

It is found in the forespore. Functionally, ensures proper spore envelope assembly. Represses premature cortex assembly until coat assembly successfully initiates. Also participates in a quality-control pathway that selectively removes defective sporulating cells through regulated cell death. Acts as an adaptator that delivers SpoIVA to the ClpXP proteolytic machinery for degradation, specifically in cells that improperly assemble the spore envelope. The protein is Cortex morphogenetic protein A of Bacillus subtilis (strain 168).